Reading from the N-terminus, the 172-residue chain is Ribosome maturation factor RimM (172 aa).

The 73-residue stretch at 99-171 (DDIPTWNYFI…LLTVEVPDGL (73 aa)) folds into the PRC barrel domain.

It belongs to the RimM family. In terms of assembly, binds ribosomal protein uS19.

Its subcellular location is the cytoplasm. In terms of biological role, an accessory protein needed during the final step in the assembly of 30S ribosomal subunit, possibly for assembly of the head region. Essential for efficient processing of 16S rRNA. May be needed both before and after RbfA during the maturation of 16S rRNA. It has affinity for free ribosomal 30S subunits but not for 70S ribosomes. The protein is Ribosome maturation factor RimM of Phocaeicola vulgatus (strain ATCC 8482 / DSM 1447 / JCM 5826 / CCUG 4940 / NBRC 14291 / NCTC 11154) (Bacteroides vulgatus).